Reading from the N-terminus, the 1116-residue chain is Rho GTPase-activating protein 45 (1116 aa).

The interval 1–72 (MFSRKKRELM…RPTSLSRHAS (72 aa)) is disordered. Residues 22–31 (GSPNPQSSSG) are compositionally biased toward polar residues. 4 positions are modified to phosphoserine: S23, S72, S92, and S98. One can recognise an F-BAR domain in the interval 268 to 538 (EEVDMLLQRC…SSKLYDPGQQ (271 aa)). Positions 375-498 (EHERRRKEIK…QIQEVIRQSD (124 aa)) form a coiled coil. The interval 422 to 457 (VAKAEEEQQGTGPGAGTAASKALDKRRRLEEEAKNK) is disordered. A compositionally biased stretch (basic and acidic residues) spans 448–457 (RRLEEEAKNK). A phosphoserine mark is found at S568, S577, S591, and S618. Residues 569-658 (PIMRTRKGSF…MSSSEELGDQ (90 aa)) form a disordered region. Positions 621–635 (ISISDTEVGLDTSSG) are enriched in polar residues. Low complexity predominate over residues 643–652 (TSSSGTMSSS). The segment at 699 to 744 (THRLRKLRTPAKCRECNSYVYFQGAECEECCLACHKKCLETLAIQC) adopts a Phorbol-ester/DAG-type zinc-finger fold. The Rho-GAP domain maps to 758–971 (QDFSQAALST…TLIVHYGLVF (214 aa)). A phosphoserine mark is found at S946, S1017, S1020, and S1022. 2 disordered regions span residues 1004–1035 (EEAE…SSSD) and 1050–1116 (AGLE…PQFV). 2 stretches are compositionally biased toward polar residues: residues 1080 to 1090 (FNTNQSNNTSR) and 1105 to 1116 (GGTSQERQPQFV).

The protein resides in the cytoplasm. Its subcellular location is the cell projection. It localises to the ruffle membrane. In terms of biological role, contains a GTPase activator for the Rho-type GTPases (RhoGAP) domain that would be able to negatively regulate the actin cytoskeleton as well as cell spreading. However, also contains N-terminally a BAR-domin which is able to play an autoinhibitory effect on this RhoGAP activity. The protein is Rho GTPase-activating protein 45 of Mus musculus (Mouse).